Consider the following 381-residue polypeptide: Genome polyprotein (381 aa).

Residues 115 to 155 (ANDTIDTGGNSKKDVKPEQGSIQPSSNKGKEKDVNAGTSGT) are disordered.

This sequence belongs to the potyviridae genome polyprotein family. In terms of processing, genome polyprotein of potyviruses undergoes post-translational proteolytic processing by the main proteinase NIa-pro resulting in the production of at least ten individual proteins. The P1 proteinase and the HC-pro cleave only their respective C-termini autocatalytically. 6K1 is essential for proper proteolytic separation of P3 from CI.

It is found in the virion. The catalysed reaction is RNA(n) + a ribonucleoside 5'-triphosphate = RNA(n+1) + diphosphate. Functionally, an RNA-dependent RNA polymerase that plays an essential role in the virus replication. In terms of biological role, involved in aphid transmission, cell-to-cell and systemis movement, encapsidation of the viral RNA and in the regulation of viral RNA amplification. The protein is Genome polyprotein of Capsicum annuum (Capsicum pepper).